The chain runs to 463 residues: ATP-dependent protease ATPase subunit HslU (463 aa).

Residues Ile-19, 61–66 (GVGKTE), Asp-277, Glu-341, and Arg-413 each bind ATP.

Belongs to the ClpX chaperone family. HslU subfamily. As to quaternary structure, a double ring-shaped homohexamer of HslV is capped on each side by a ring-shaped HslU homohexamer. The assembly of the HslU/HslV complex is dependent on binding of ATP.

It localises to the cytoplasm. Its function is as follows. ATPase subunit of a proteasome-like degradation complex; this subunit has chaperone activity. The binding of ATP and its subsequent hydrolysis by HslU are essential for unfolding of protein substrates subsequently hydrolyzed by HslV. HslU recognizes the N-terminal part of its protein substrates and unfolds these before they are guided to HslV for hydrolysis. This is ATP-dependent protease ATPase subunit HslU from Bacillus cytotoxicus (strain DSM 22905 / CIP 110041 / 391-98 / NVH 391-98).